Here is a 157-residue protein sequence, read N- to C-terminus: Transcriptional regulator MraZ (157 aa).

SpoVT-AbrB domains are found at residues 7 to 52 and 83 to 126; these read TYTM…AGGN and SETL…EPER.

It belongs to the MraZ family. As to quaternary structure, forms oligomers.

It localises to the cytoplasm. Its subcellular location is the nucleoid. The protein is Transcriptional regulator MraZ of Xanthobacter autotrophicus (strain ATCC BAA-1158 / Py2).